The following is a 327-amino-acid chain: Protein-L-isoaspartate O-methyltransferase (327 aa).

Disordered regions lie at residues 1–38 (MSGE…DAAR) and 62–105 (PRAA…KSAT). A compositionally biased stretch (basic and acidic residues) spans 14–29 (EDLKREPRKPEGRAAE). The span at 62–77 (PRAAGASGSGVPVAKP) shows a compositional bias: low complexity. The segment covering 92–105 (APSSGVKNGDKSAT) has biased composition (polar residues). The active site involves Ser175.

Belongs to the methyltransferase superfamily. L-isoaspartyl/D-aspartyl protein methyltransferase family.

Its subcellular location is the cytoplasm. The enzyme catalyses [protein]-L-isoaspartate + S-adenosyl-L-methionine = [protein]-L-isoaspartate alpha-methyl ester + S-adenosyl-L-homocysteine. Its function is as follows. Catalyzes the methyl esterification of L-isoaspartyl residues in peptides and proteins that result from spontaneous decomposition of normal L-aspartyl and L-asparaginyl residues. It plays a role in the repair and/or degradation of damaged proteins. This Burkholderia thailandensis (strain ATCC 700388 / DSM 13276 / CCUG 48851 / CIP 106301 / E264) protein is Protein-L-isoaspartate O-methyltransferase.